A 31-amino-acid polypeptide reads, in one-letter code: Histone H1.3 (31 aa).

It belongs to the histone H1/H5 family.

Its subcellular location is the nucleus. It is found in the chromosome. Histones H1 are necessary for the condensation of nucleosome chains into higher-order structures. In Triticum aestivum (Wheat), this protein is Histone H1.3.